The sequence spans 507 residues: Xaa-Pro aminopeptidase 3 (507 aa).

A mitochondrion-targeting transit peptide spans 1 to 31 (MPWLLSAPKLVPAVANVRGLSGCMLCSQRRY). Residues 54 to 79 (HPHLLRPGEVTPGLSQVEYALRRHKL) are interaction with TNFRSF1B. 7 residues coordinate substrate: Tyr300, Asp331, Asp342, His424, His431, Glu451, and Glu475. Mn(2+) is bound by residues Asp331, Asp342, and His424. Mn(2+) is bound by residues Glu451 and Glu475.

This sequence belongs to the peptidase M24B family. In terms of assembly, homodimer. Isoform 1 interacts with TNFRSF1B/TNFR2 (activated) and TRAF2. It depends on Mn(2+) as a cofactor. As to expression, isoform 1 and isoform 2 are widely expressed, with isoform 1 being more abundant.

The protein resides in the mitochondrion. It localises to the cytoplasm. The catalysed reaction is Release of any N-terminal amino acid, including proline, that is linked to proline, even from a dipeptide or tripeptide.. In terms of biological role, catalyzes the removal of a penultimate prolyl residue from the N-termini of peptides, such as Leu-Pro-Ala. Also shows low activity towards peptides with Ala or Ser at the P1 position. Functionally, promotes TNFRSF1B-mediated phosphorylation of MAPK8/JNK1 and MAPK9/JNK2, suggesting a function as an adapter protein for TNFRSF1B; the effect is independent of XPNPEP3 peptidase activity. May inhibit apoptotic cell death induced via TNF-TNFRSF1B signaling. This Homo sapiens (Human) protein is Xaa-Pro aminopeptidase 3 (XPNPEP3).